The sequence spans 188 residues: Elongation factor P (188 aa).

The protein belongs to the elongation factor P family.

It is found in the cytoplasm. The protein operates within protein biosynthesis; polypeptide chain elongation. In terms of biological role, involved in peptide bond synthesis. Stimulates efficient translation and peptide-bond synthesis on native or reconstituted 70S ribosomes in vitro. Probably functions indirectly by altering the affinity of the ribosome for aminoacyl-tRNA, thus increasing their reactivity as acceptors for peptidyl transferase. In Ureaplasma parvum serovar 3 (strain ATCC 700970), this protein is Elongation factor P (efp).